The sequence spans 258 residues: Venom plasminogen activator Haly-PA (258 aa).

A signal peptide spans 1 to 18 (MALIRVLANLLILQLSYA). Positions 19–24 (QKSSEL) are excised as a propeptide. Positions 25-249 (VVGGDECNIN…HLDWIKSIIA (225 aa)) constitute a Peptidase S1 domain. 6 disulfide bridges follow: cysteine 31–cysteine 163, cysteine 50–cysteine 66, cysteine 98–cysteine 256, cysteine 142–cysteine 210, cysteine 174–cysteine 189, and cysteine 200–cysteine 225. Residue asparagine 44 is glycosylated (N-linked (GlcNAc...) asparagine). Active-site charge relay system residues include histidine 65 and aspartate 110. Catalysis depends on serine 204, which acts as the Charge relay system.

It belongs to the peptidase S1 family. Snake venom subfamily. As to quaternary structure, monomer. Post-translationally, glycosylated. As to expression, expressed by the venom gland.

It localises to the secreted. Functionally, snake venom serine protease that activates plasminogen. Displays indirect fibrino(geno)lytic activity through conversion of plasminogen to plasmin. Shows a preferential cleavage at Arg-|-Xaa instead of Lys-|-Xaa bonds. This is Venom plasminogen activator Haly-PA from Gloydius brevicauda (Korean slamosa snake).